Consider the following 348-residue polypeptide: L-asparaginase 2 (348 aa).

An N-terminal signal peptide occupies residues 1–22; sequence MEFFKKTALAALVMGFSGAALA. The Asparaginase/glutaminase domain occupies 24–348; it reads PNITILATGG…QQIQQIFNQY (325 aa). T34 serves as the catalytic O-isoaspartyl threonine intermediate. Residues 80–81 and 111–112 contribute to the substrate site; these read SQ and TD. C99 and C127 are joined by a disulfide.

It belongs to the asparaginase 1 family. As to quaternary structure, homotetramer.

The protein resides in the periplasm. The enzyme catalyses L-asparagine + H2O = L-aspartate + NH4(+). The sequence is that of L-asparaginase 2 (ansB) from Escherichia coli (strain K12).